The primary structure comprises 201 residues: Glycerol-3-phosphate acyltransferase (201 aa).

5 helical membrane-spanning segments follow: residues Leu5 to Val25, Lys55 to Ala75, Trp88 to Phe108, Leu118 to Val138, and Thr164 to Leu184.

It belongs to the PlsY family. As to quaternary structure, probably interacts with PlsX.

The protein resides in the cell inner membrane. It carries out the reaction an acyl phosphate + sn-glycerol 3-phosphate = a 1-acyl-sn-glycero-3-phosphate + phosphate. It functions in the pathway lipid metabolism; phospholipid metabolism. In terms of biological role, catalyzes the transfer of an acyl group from acyl-phosphate (acyl-PO(4)) to glycerol-3-phosphate (G3P) to form lysophosphatidic acid (LPA). This enzyme utilizes acyl-phosphate as fatty acyl donor, but not acyl-CoA or acyl-ACP. The sequence is that of Glycerol-3-phosphate acyltransferase from Anaeromyxobacter sp. (strain K).